A 135-amino-acid chain; its full sequence is Sex-regulated protein janus-A (135 aa).

Position 37 (Lys37) interacts with substrate. His63 functions as the Proton acceptor in the catalytic mechanism. Residue 104–106 coordinates substrate; it reads SQG.

The protein belongs to the janus family.

Functionally, janA and janB regulate somatic sex differentiation. The polypeptide is Sex-regulated protein janus-A (janA) (Drosophila erecta (Fruit fly)).